We begin with the raw amino-acid sequence, 617 residues long: Probable translation initiation factor IF-2 (617 aa).

One can recognise a tr-type G domain in the interval 14-231 (LRQPIVVVLG…VLAGLTQTYL (218 aa)). The tract at residues 23-30 (GHVDHGKT) is G1. A GTP-binding site is contributed by 23–30 (GHVDHGKT). The interval 48-52 (GITQH) is G2. A G3 region spans residues 87–90 (DTPG). GTP contacts are provided by residues 87-91 (DTPGH) and 141-144 (NKID). The G4 stretch occupies residues 141–144 (NKID). The G5 stretch occupies residues 209 to 211 (SAR).

This sequence belongs to the TRAFAC class translation factor GTPase superfamily. Classic translation factor GTPase family. IF-2 subfamily.

Functionally, function in general translation initiation by promoting the binding of the formylmethionine-tRNA to ribosomes. Seems to function along with eIF-2. This chain is Probable translation initiation factor IF-2 (infB), found in Aeropyrum pernix (strain ATCC 700893 / DSM 11879 / JCM 9820 / NBRC 100138 / K1).